A 914-amino-acid polypeptide reads, in one-letter code: Exoglucanase-2 (914 aa).

A signal peptide spans 1 to 33 (MKRRLMKGISLLTLVFLIGIMLQLSLKSELTAY). In terms of domain architecture, CBM3 spans 763–914 (VEGVLIIQSF…SGNLVYGIEP (152 aa)).

Belongs to the glycosyl hydrolase 48 (cellulase L) family.

The enzyme catalyses Hydrolysis of (1-&gt;4)-beta-D-glucosidic linkages in cellulose and cellotetraose, releasing cellobiose from the non-reducing ends of the chains.. This Thermoclostridium stercorarium (strain ATCC 35414 / DSM 8532 / NCIMB 11754) (Clostridium stercorarium) protein is Exoglucanase-2 (celY).